The primary structure comprises 99 residues: Small ribosomal subunit protein bS20 (99 aa).

Residues 1-20 (MASAKPKKKNPRLASGRKRA) show a composition bias toward basic residues. Residues 1–29 (MASAKPKKKNPRLASGRKRARQDVKLNAA) form a disordered region.

This sequence belongs to the bacterial ribosomal protein bS20 family.

Binds directly to 16S ribosomal RNA. The protein is Small ribosomal subunit protein bS20 of Paracidovorax citrulli (strain AAC00-1) (Acidovorax citrulli).